The primary structure comprises 276 residues: L-aminoadipate-semialdehyde dehydrogenase-phosphopantetheinyl transferase (276 aa).

It belongs to the P-Pant transferase superfamily. AcpS family.

The enzyme catalyses apo-[ACP] + CoA = holo-[ACP] + adenosine 3',5'-bisphosphate + H(+). Functionally, catalyzes the transfer of a 4'-phosphopantetheine moiety from coenzyme A to a serine residue of acceptor proteins, such as alpha-aminoadipate reductase. Necessary for alpha-aminoadipate reductase activity. This is L-aminoadipate-semialdehyde dehydrogenase-phosphopantetheinyl transferase (LYS5) from Eremothecium gossypii (strain ATCC 10895 / CBS 109.51 / FGSC 9923 / NRRL Y-1056) (Yeast).